The sequence spans 119 residues: Enhancer of yellow 2 transcription factor (119 aa).

Positions leucine 93–asparagine 119 are disordered. Acidic residues predominate over residues asparagine 96–asparagine 119.

It belongs to the ENY2 family. As to quaternary structure, component of the nuclear pore complex (NPC)-associated AMEX complex (anchoring and mRNA export complex), composed of at least e(y)2 and xmas-2. Component of the SAGA transcription coactivator-HAT complexes, at least composed of Ada2b, e(y)2, Pcaf/Gcn5, Taf10 and Nipped-A/Trrap. Within the SAGA complex, e(y)2, Sgf11, and not/nonstop form an additional subcomplex of SAGA called the DUB module (deubiquitination module). Component of the THO complex, composed of at least e(y)2, HPR1, THO2, THOC5, THOC6 and THOC7. Interacts with e(y)1. Interacts with su(Hw) (via zinc fingers). Interacts with xmas-2; required for localization to the nuclear periphery. Interacts with the nuclear pore complex (NPC).

It is found in the nucleus. The protein resides in the nucleoplasm. It localises to the cytoplasm. In terms of biological role, involved in mRNA export coupled transcription activation by association with both the AMEX and the SAGA complexes. The SAGA complex is a multiprotein complex that activates transcription by remodeling chromatin and mediating histone acetylation and deubiquitination. Within the SAGA complex, participates in a subcomplex that specifically deubiquitinates histone H2B. The SAGA complex is recruited to specific gene promoters by activators, where it is required for transcription. Required for nuclear receptor-mediated transactivation. Involved in transcription elongation by recruiting the THO complex onto nascent mRNA. The AMEX complex functions in docking export-competent ribonucleoprotein particles (mRNPs) to the nuclear entrance of the nuclear pore complex (nuclear basket). AMEX participates in mRNA export and accurate chromatin positioning in the nucleus by tethering genes to the nuclear periphery. This is Enhancer of yellow 2 transcription factor from Drosophila willistoni (Fruit fly).